Reading from the N-terminus, the 258-residue chain is 5'-nucleotidase SurE (258 aa).

A divalent metal cation contacts are provided by Asp8, Asp9, Ser40, and Asn92.

It belongs to the SurE nucleotidase family. Requires a divalent metal cation as cofactor.

It is found in the cytoplasm. The catalysed reaction is a ribonucleoside 5'-phosphate + H2O = a ribonucleoside + phosphate. In terms of biological role, nucleotidase that shows phosphatase activity on nucleoside 5'-monophosphates. The protein is 5'-nucleotidase SurE of Brucella anthropi (strain ATCC 49188 / DSM 6882 / CCUG 24695 / JCM 21032 / LMG 3331 / NBRC 15819 / NCTC 12168 / Alc 37) (Ochrobactrum anthropi).